Reading from the N-terminus, the 215-residue chain is Cytochrome c biogenesis ATP-binding export protein CcmA (215 aa).

Residues 3-215 enclose the ABC transporter domain; it reads LEAENLAGER…MAAFSVEDIA (213 aa). 35–42 contributes to the ATP binding site; sequence GPNGSGKS.

Belongs to the ABC transporter superfamily. CcmA exporter (TC 3.A.1.107) family. As to quaternary structure, the complex is composed of two ATP-binding proteins (CcmA) and two transmembrane proteins (CcmB).

It is found in the cell inner membrane. The catalysed reaction is heme b(in) + ATP + H2O = heme b(out) + ADP + phosphate + H(+). Its function is as follows. Part of the ABC transporter complex CcmAB involved in the biogenesis of c-type cytochromes; once thought to export heme, this seems not to be the case, but its exact role is uncertain. Responsible for energy coupling to the transport system. This chain is Cytochrome c biogenesis ATP-binding export protein CcmA, found in Brucella abortus (strain 2308).